Reading from the N-terminus, the 470-residue chain is BTB/POZ domain-containing protein 17 (470 aa).

The first 18 residues, 1 to 18 (MRMKGLYVVPLLLALVES), serve as a signal peptide directing secretion. In terms of domain architecture, BTB spans 53–122 (SDTTLRIRTA…FYCGEISVNL (70 aa)). In terms of domain architecture, BACK spans 161-261 (VVSWYHYALR…ITPSQLFQIQ (101 aa)).

It localises to the secreted. The polypeptide is BTB/POZ domain-containing protein 17 (btbd17) (Xenopus laevis (African clawed frog)).